A 294-amino-acid polypeptide reads, in one-letter code: Deubiquitinase OTUD6B (294 aa).

Disordered stretches follow at residues 1–46 (MDEA…RKQL) and 67–120 (AFAQ…ERDE). 2 stretches are compositionally biased toward polar residues: residues 27 to 36 (KIQSMKNSVP) and 73 to 86 (PEPT…NGVT). The segment covering 111 to 120 (KAAQEKERDE) has biased composition (basic and acidic residues). The OTU domain maps to 150 to 287 (LQIRQIPSDG…GEHYNSVELL (138 aa)). The cys-loop stretch occupies residues 155–161 (IPSDGHC). D158 is an active-site residue. C161 functions as the Nucleophile in the catalytic mechanism. Residues 222 to 232 (IVNTPAWGGQL) are variable-loop. The his-loop stretch occupies residues 270–280 (YMRHAYGLGEH). H280 is an active-site residue.

The enzyme catalyses Thiol-dependent hydrolysis of ester, thioester, amide, peptide and isopeptide bonds formed by the C-terminal Gly of ubiquitin (a 76-residue protein attached to proteins as an intracellular targeting signal).. Functionally, deubiquitinating enzyme that may play a role in the ubiquitin-dependent regulation of different cellular processes. This is Deubiquitinase OTUD6B (otud6b) from Xenopus tropicalis (Western clawed frog).